The primary structure comprises 312 residues: Olfactory receptor 4F6 (312 aa).

Residues 1–25 (MDEANHSVVSEFVFLGLSDSRKIQL) lie on the Extracellular side of the membrane. Asn-5 is a glycosylation site (N-linked (GlcNAc...) asparagine). Residues 26–49 (LLFLFFSVFYVSSLMGNLLIVLTV) traverse the membrane as a helical segment. Topologically, residues 50–57 (TSDPRLQS) are cytoplasmic. The chain crosses the membrane as a helical span at residues 58–79 (PMYFLLANLSIINLVFCSSTAP). Over 80 to 100 (KMIYDLFRKHKTISFGGCVVQ) the chain is Extracellular. A disulfide bridge connects residues Cys-97 and Cys-189. Residues 101 to 120 (IFFIHAVGGTEMVLLIAMAF) traverse the membrane as a helical segment. Residues 121–139 (DRYVAICKPLHYLTIMNPQ) lie on the Cytoplasmic side of the membrane. The helical transmembrane segment at 140-158 (RCILFLVISWIIGIIHSVI) threads the bilayer. The Extracellular portion of the chain corresponds to 159–195 (QLAFVVDLLFCGPNELDSFFCDLPRFIKLACIETYTL). Residues 196-219 (GFMVTANSGFISLASFLILIISYI) form a helical membrane-spanning segment. Residues 220–235 (FILVTVQKKSSGGIFK) are Cytoplasmic-facing. Residues 236–258 (AFSMLSAHVIVVVLVFGPLIFFY) form a helical membrane-spanning segment. The Extracellular portion of the chain corresponds to 259-269 (IFPFPTSHLDK). A helical transmembrane segment spans residues 270 to 289 (FLAIFDAVITPVLNPVIYTF). The Cytoplasmic portion of the chain corresponds to 290 to 312 (RNKEMMVAMRRRCSQFVNYSKIF).

It belongs to the G-protein coupled receptor 1 family.

The protein localises to the cell membrane. Its function is as follows. Odorant receptor. The protein is Olfactory receptor 4F6 (OR4F6) of Homo sapiens (Human).